Reading from the N-terminus, the 210-residue chain is Prohead protease (210 aa).

The propeptide occupies 1–23; the sequence is MTQAAIDYNKLKSAPVHLDAYIK. Residues histidine 76, serine 122, and glutamate 148 contribute to the active site. A propeptide spanning residues 167-210 is cleaved from the precursor; sequence SMNGHDYTEWRKSFTAISSKAVPAQERNLSELEKLAIALGYVKE.

This sequence belongs to the HK97 prohead protease protein family. Post-translationally, cleaves itself autocatalytically to yield the mature form of the protease.

The protein resides in the virion. In terms of biological role, serine protease involved in capsid assembly and maturation. Cleaves the major capsid protein, the decoration protein, the portal protein to yield mature procapsids competent for DNA packaging. Acts as a trigger for assembly of the capsid protein. This chain is Prohead protease, found in Escherichia coli (Enterobacteria phage T5).